The chain runs to 529 residues: DNA-binding protein (529 aa).

Over residues 1 to 17 the composition is skewed to basic and acidic residues; it reads MASREEEQRETTPERGR. Disordered stretches follow at residues 1 to 107 and 125 to 166; these read MASR…IVDS and PVLI…AESE. Basic residues predominate over residues 129–139; it reads KHGKGGKRTVR. The segment covering 155–165 has biased composition (acidic residues); it reads EEEEEPSEAES. Residue Tyr195 is modified to Phosphotyrosine; by host. The Zn(2+) site is built by Cys284 and His286. Residues 297 to 331 are flexible loop; the sequence is IEMDVTSENGQRALKEQSSKAKIVKNRWGRNVVQI. Zn(2+)-binding residues include Cys339, Cys355, Cys396, Cys398, Cys450, and Cys467. The interval 513–529 is C-terminal arm, DBP binding; sequence VSLPVAHSDARQNPFDF.

Belongs to the adenoviridae E2A DNA-binding protein family. Homomultimerizes on viral ssDNA bound to pTP. Forms a initiation complex with viral polymerase, pTP and hosts NFIA and POU2F1/OCT1. Interacts with host SRCAP.

It is found in the host nucleus. Plays a role in the elongation phase of viral strand displacement replication by unwinding the template in an ATP-independent fashion, employing its capacity to form multimers. Also enhances the rate of initiation. Released from template upon second strand synthesis. Assembles in complex with viral pTP, viral pol, host NFIA and host POU2F1/OCT1 on viral origin of replication. Covers the whole ssDNA genome during synthesis. The complementary strand synthesis induces its relese from DNA template. May inhibit cellular transcription mediated by the interaction between host SRCAP and CBP. The polypeptide is DNA-binding protein (Human adenovirus C serotype 5 (HAdV-5)).